A 422-amino-acid chain; its full sequence is Beta-1,3-galactosyltransferase 2 (422 aa).

Topologically, residues 1-24 (MLQWRRRHCCFAKMTWNAKRSLFR) are cytoplasmic. Residues 25 to 45 (THLIGVLSLVFLFAMFLFFNH) form a helical; Signal-anchor for type II membrane protein membrane-spanning segment. Residues 46–422 (HDWLPGRAGF…AGRYRHRKLH (377 aa)) are Lumenal-facing. Residues Asn75, Asn100, Asn119, Asn176, and Asn226 are each glycosylated (N-linked (GlcNAc...) asparagine). The tract at residues 90–110 (TLRPQTATNSNNTDLSPQGVT) is disordered.

It belongs to the glycosyltransferase 31 family. The cofactor is Mn(2+). In terms of tissue distribution, detected in heart and brain.

It is found in the golgi apparatus membrane. The catalysed reaction is an N-acetyl-beta-D-glucosaminyl derivative + UDP-alpha-D-galactose = a beta-D-galactosyl-(1-&gt;3)-N-acetyl-beta-D-glucosaminyl derivative + UDP + H(+). It catalyses the reaction a beta-D-GlcNAc-(1-&gt;3)-beta-D-Gal-(1-&gt;4)-beta-D-Glc-(1&lt;-&gt;1)-Cer(d18:1(4E)) + UDP-alpha-D-galactose = a beta-D-Gal-(1-&gt;3)-beta-D-GlcNAc-(1-&gt;3)-beta-D-Gal-(1-&gt;4)-beta-D-Glc-(1&lt;-&gt;1')-Cer(d18:1(4E)) + UDP + H(+). The enzyme catalyses a neolactoside IV(3)-beta-GlcNAc-nLc4Cer(d18:1(4E)) + UDP-alpha-D-galactose = a neolactoside IV(3)-beta-[Gal-beta-(1-&gt;3)-GlcNAc]-nLc4Cer(d18:1(4E)) + UDP + H(+). It functions in the pathway protein modification; protein glycosylation. Beta-1,3-galactosyltransferase that transfers galactose from UDP-galactose to substrates with a terminal beta-N-acetylglucosamine (beta-GlcNAc) residue. Can also utilize substrates with a terminal galactose residue, albeit with lower efficiency. Involved in the biosynthesis of the carbohydrate moieties of glycolipids and glycoproteins. Inactive towards substrates with terminal alpha-N-acetylglucosamine (alpha-GlcNAc) or alpha-N-acetylgalactosamine (alpha-GalNAc) residues. The chain is Beta-1,3-galactosyltransferase 2 from Homo sapiens (Human).